A 130-amino-acid polypeptide reads, in one-letter code: Small ribosomal subunit protein uS8 (130 aa).

This sequence belongs to the universal ribosomal protein uS8 family. In terms of assembly, part of the 30S ribosomal subunit. Contacts proteins S5 and S12.

Its function is as follows. One of the primary rRNA binding proteins, it binds directly to 16S rRNA central domain where it helps coordinate assembly of the platform of the 30S subunit. The polypeptide is Small ribosomal subunit protein uS8 (Pseudoalteromonas translucida (strain TAC 125)).